The sequence spans 303 residues: Cysteine synthase B (303 aa).

K41 is modified (N6-(pyridoxal phosphate)lysine). Pyridoxal 5'-phosphate is bound by residues N71, 174 to 178 (GTTGT), and S255.

This sequence belongs to the cysteine synthase/cystathionine beta-synthase family. The cofactor is pyridoxal 5'-phosphate.

The catalysed reaction is O-acetyl-L-serine + hydrogen sulfide = L-cysteine + acetate. The protein operates within amino-acid biosynthesis; L-cysteine biosynthesis; L-cysteine from L-serine: step 2/2. Two cysteine synthase enzymes are found. Both catalyze the same reaction. Cysteine synthase B can also use thiosulfate in place of sulfide to give cysteine thiosulfonate as a product. The polypeptide is Cysteine synthase B (cysM) (Salmonella typhimurium (strain LT2 / SGSC1412 / ATCC 700720)).